Reading from the N-terminus, the 79-residue chain is Acyl carrier protein (79 aa).

The 76-residue stretch at 2-77 (SNIEERVKKI…QAIDYINAHA (76 aa)) folds into the Carrier domain. Ser-37 is subject to O-(pantetheine 4'-phosphoryl)serine.

Belongs to the acyl carrier protein (ACP) family. 4'-phosphopantetheine is transferred from CoA to a specific serine of apo-ACP by AcpS. This modification is essential for activity because fatty acids are bound in thioester linkage to the sulfhydryl of the prosthetic group.

It localises to the cytoplasm. It participates in lipid metabolism; fatty acid biosynthesis. Carrier of the growing fatty acid chain in fatty acid biosynthesis. In Thioalkalivibrio sulfidiphilus (strain HL-EbGR7), this protein is Acyl carrier protein.